The chain runs to 90 residues: Progonadoliberin-3 (90 aa).

The N-terminal stretch at 1–23 (MEASSRVTVQVLLLALVVQVTLS) is a signal peptide. At Q24 the chain carries Pyrrolidone carboxylic acid. Glycine amide is present on G33.

This sequence belongs to the GnRH family.

Its subcellular location is the secreted. Functionally, stimulates the secretion of gonadotropins. This Sparus aurata (Gilthead sea bream) protein is Progonadoliberin-3 (gnrh3).